The sequence spans 418 residues: Glutamyl-tRNA reductase (418 aa).

Residues 49–52, Ser109, 114–116, and Gln120 each bind substrate; these read TCNR and EPQ. Catalysis depends on Cys50, which acts as the Nucleophile. Residue 189–194 coordinates NADP(+); sequence GAGETI.

Belongs to the glutamyl-tRNA reductase family. Homodimer.

It catalyses the reaction (S)-4-amino-5-oxopentanoate + tRNA(Glu) + NADP(+) = L-glutamyl-tRNA(Glu) + NADPH + H(+). It functions in the pathway porphyrin-containing compound metabolism; protoporphyrin-IX biosynthesis; 5-aminolevulinate from L-glutamyl-tRNA(Glu): step 1/2. Its function is as follows. Catalyzes the NADPH-dependent reduction of glutamyl-tRNA(Glu) to glutamate 1-semialdehyde (GSA). This Escherichia coli O6:K15:H31 (strain 536 / UPEC) protein is Glutamyl-tRNA reductase.